The following is a 462-amino-acid chain: L-seryl-tRNA(Sec) selenium transferase (462 aa).

Lys295 is modified (N6-(pyridoxal phosphate)lysine).

The protein belongs to the SelA family. As to quaternary structure, homodecamer; pentamer of dimers. Binds only one seryl-tRNA(Sec) per dimer. Pyridoxal 5'-phosphate is required as a cofactor.

The protein localises to the cytoplasm. The catalysed reaction is L-seryl-tRNA(Sec) + selenophosphate + H(+) = L-selenocysteinyl-tRNA(Sec) + phosphate. Its pathway is aminoacyl-tRNA biosynthesis; selenocysteinyl-tRNA(Sec) biosynthesis; selenocysteinyl-tRNA(Sec) from L-seryl-tRNA(Sec) (bacterial route): step 1/1. In terms of biological role, converts seryl-tRNA(Sec) to selenocysteinyl-tRNA(Sec) required for selenoprotein biosynthesis. The protein is L-seryl-tRNA(Sec) selenium transferase of Klebsiella pneumoniae (strain 342).